Consider the following 144-residue polypeptide: MKLMGLDVGSRTVGVAISDAFGWTAQGVEIIRINEDAEEFGIDRVAELVEELDAGGFVLGLPKNMNNTLGPRAEAAQHYGELLTARFHLPVDFEDERLTTVEAERMLVEEANTSRKKRKKVIDKLAASLILQNYLDRHGKLTQE.

The protein belongs to the YqgF nuclease family.

It localises to the cytoplasm. Could be a nuclease involved in processing of the 5'-end of pre-16S rRNA. The protein is Putative pre-16S rRNA nuclease of Lactiplantibacillus plantarum (strain ATCC BAA-793 / NCIMB 8826 / WCFS1) (Lactobacillus plantarum).